We begin with the raw amino-acid sequence, 285 residues long: Cyclin-Y-like protein 1B (285 aa).

Positions 111–209 (PKRNCIFRHF…CFLELLEFNI (99 aa)) constitute a Cyclin N-terminal domain.

This sequence belongs to the cyclin family. Cyclin Y subfamily.

The chain is Cyclin-Y-like protein 1B from Homo sapiens (Human).